We begin with the raw amino-acid sequence, 332 residues long: Nuclear migration protein nudC (332 aa).

The disordered stretch occupies residues 122 to 161; that stretch reads RQQLLDSAGGEPSASNRDGISKPIEKVDDESDKSELGKLM. In terms of domain architecture, CS spans 168–259; it reads CTLENYTWTQ…NKMNWWSRLV (92 aa).

The protein belongs to the nudC family. In terms of assembly, interacts with PCID2.

It is found in the cytoplasm. Chaperone protein with functions in nuclear localization and cytoplasmic mRNA trafficking. In postmitotic neurons, acts with nudE downstream of dar1 to ensure correct positioning of the nuclei in primary dendrites and as a consequence, is required for determining multipolar neuron morphology. Stabilizes PCID2 in the cytoplasm and thereby is required for promoting cytoplasmic mRNA trafficking. This is Nuclear migration protein nudC from Drosophila melanogaster (Fruit fly).